The primary structure comprises 375 residues: LIM domain-binding protein 1 (375 aa).

2 disordered regions span residues 248-294 (PPAE…TFAL) and 331-375 (DAAN…QASQ). Residues 266 to 282 (SGGSTMSSGGGNTNNSN) show a composition bias toward low complexity. Residues 300-339 (DVMVVGEPTLMGGEFGDEDERLITRLENTQFDAANGIDDE) form the LIM interaction domain (LID) domain.

Belongs to the LDB family. In terms of assembly, forms homodimers and heterodimers. Interacts with the LIM domain of LIM/homeobox factor lhx1/lim1, and with lhx3/lim3 and lhx5/lim5. Activates lhx1/lim1 by binding. The stoichiometry of lhx1/lim1 and ldb1 is important for their function and an excess of ldb1 can inhibit lhx1/lim1 function. When bound to lhx1/lim1, escapes degradation by rnf12. The N-terminus interacts with the N-terminal region of rnf12. In terms of processing, undergoes rnf12-mediated ubiquitin-proteasome-dependent degradation. In terms of tissue distribution, ubiquitously expressed in the early gastrula before localizing to the dorsal region of the vegetal hemisphere, which contains the Spemann organizer. Expressed in the CNS, pronephros and tail bud in neurula and tail-bud stage embryos. Expressed in multiple adult tissues including brain, heart, lung, stomach, intestine, liver, spleen, kidney, ovary, muscle and skin.

It localises to the nucleus. Binds to the LIM domain of a wide variety of LIM domain-containing transcription factors. Acts as a coactivator together with otx2 to stimulate lhx1/lim1-mediated activation of the gsc promoter in the Spemann organizer. Acts synergistically with lhx1/lim1 and ssbp in axis formation. In Xenopus laevis (African clawed frog), this protein is LIM domain-binding protein 1 (ldb1).